The primary structure comprises 370 residues: Phosphate acyltransferase (370 aa).

The interval 349–370 is disordered; the sequence is SAGRAGQDAPDEMAAPGRSEKR.

Belongs to the PlsX family. As to quaternary structure, homodimer. Probably interacts with PlsY.

The protein localises to the cytoplasm. The catalysed reaction is a fatty acyl-[ACP] + phosphate = an acyl phosphate + holo-[ACP]. It participates in lipid metabolism; phospholipid metabolism. Functionally, catalyzes the reversible formation of acyl-phosphate (acyl-PO(4)) from acyl-[acyl-carrier-protein] (acyl-ACP). This enzyme utilizes acyl-ACP as fatty acyl donor, but not acyl-CoA. The chain is Phosphate acyltransferase from Cereibacter sphaeroides (strain ATCC 17029 / ATH 2.4.9) (Rhodobacter sphaeroides).